The sequence spans 728 residues: Elongation factor 2 (728 aa).

The tr-type G domain occupies lysine 18 to isoleucine 258. GTP-binding positions include alanine 27–threonine 34, aspartate 93–histidine 97, and asparagine 147–aspartate 150. Histidine 594 is subject to Diphthamide.

The protein belongs to the TRAFAC class translation factor GTPase superfamily. Classic translation factor GTPase family. EF-G/EF-2 subfamily.

The protein localises to the cytoplasm. Functionally, catalyzes the GTP-dependent ribosomal translocation step during translation elongation. During this step, the ribosome changes from the pre-translocational (PRE) to the post-translocational (POST) state as the newly formed A-site-bound peptidyl-tRNA and P-site-bound deacylated tRNA move to the P and E sites, respectively. Catalyzes the coordinated movement of the two tRNA molecules, the mRNA and conformational changes in the ribosome. The chain is Elongation factor 2 (fusA) from Archaeoglobus fulgidus (strain ATCC 49558 / DSM 4304 / JCM 9628 / NBRC 100126 / VC-16).